Reading from the N-terminus, the 281-residue chain is Ribosomal protein L11 methyltransferase (281 aa).

S-adenosyl-L-methionine is bound by residues Thr-133, Gly-154, Asp-175, and Asn-216.

It belongs to the methyltransferase superfamily. PrmA family.

The protein resides in the cytoplasm. The enzyme catalyses L-lysyl-[protein] + 3 S-adenosyl-L-methionine = N(6),N(6),N(6)-trimethyl-L-lysyl-[protein] + 3 S-adenosyl-L-homocysteine + 3 H(+). Methylates ribosomal protein L11. The chain is Ribosomal protein L11 methyltransferase from Campylobacter jejuni (strain RM1221).